Reading from the N-terminus, the 141-residue chain is Translation initiation factor 2 subunit beta (141 aa).

Belongs to the eIF-2-beta/eIF-5 family. Heterotrimer composed of an alpha, a beta and a gamma chain.

EIF-2 functions in the early steps of protein synthesis by forming a ternary complex with GTP and initiator tRNA. The protein is Translation initiation factor 2 subunit beta of Sulfolobus acidocaldarius (strain ATCC 33909 / DSM 639 / JCM 8929 / NBRC 15157 / NCIMB 11770).